The primary structure comprises 103 residues: Turripeptide OL55-like (103 aa).

In terms of processing, contains 8 disulfide bonds. Expressed by the venom duct.

It is found in the secreted. In terms of biological role, acts as a neurotoxin by inhibiting an ion channel. This Lophiotoma albina (Sea snail) protein is Turripeptide OL55-like.